The chain runs to 234 residues: Leucyl/phenylalanyl-tRNA--protein transferase (234 aa).

The protein belongs to the L/F-transferase family.

The protein resides in the cytoplasm. The catalysed reaction is N-terminal L-lysyl-[protein] + L-leucyl-tRNA(Leu) = N-terminal L-leucyl-L-lysyl-[protein] + tRNA(Leu) + H(+). It carries out the reaction N-terminal L-arginyl-[protein] + L-leucyl-tRNA(Leu) = N-terminal L-leucyl-L-arginyl-[protein] + tRNA(Leu) + H(+). It catalyses the reaction L-phenylalanyl-tRNA(Phe) + an N-terminal L-alpha-aminoacyl-[protein] = an N-terminal L-phenylalanyl-L-alpha-aminoacyl-[protein] + tRNA(Phe). Functionally, functions in the N-end rule pathway of protein degradation where it conjugates Leu, Phe and, less efficiently, Met from aminoacyl-tRNAs to the N-termini of proteins containing an N-terminal arginine or lysine. The polypeptide is Leucyl/phenylalanyl-tRNA--protein transferase (Shigella flexneri serotype 5b (strain 8401)).